A 433-amino-acid chain; its full sequence is Glutamate-1-semialdehyde 2,1-aminomutase (433 aa).

Lysine 272 bears the N6-(pyridoxal phosphate)lysine mark.

It belongs to the class-III pyridoxal-phosphate-dependent aminotransferase family. HemL subfamily. Homodimer. Pyridoxal 5'-phosphate is required as a cofactor.

It localises to the cytoplasm. The catalysed reaction is (S)-4-amino-5-oxopentanoate = 5-aminolevulinate. The protein operates within porphyrin-containing compound metabolism; protoporphyrin-IX biosynthesis; 5-aminolevulinate from L-glutamyl-tRNA(Glu): step 2/2. This Methylacidiphilum infernorum (isolate V4) (Methylokorus infernorum (strain V4)) protein is Glutamate-1-semialdehyde 2,1-aminomutase.